The chain runs to 267 residues: Putative B3 domain-containing protein LOC_Os07g12820 (267 aa).

Positions 4–99 (PTFSMVKIKT…RLNVIIFNKE (96 aa)) form a DNA-binding region, TF-B3.

It localises to the nucleus. The polypeptide is Putative B3 domain-containing protein LOC_Os07g12820 (Oryza sativa subsp. japonica (Rice)).